Here is a 97-residue protein sequence, read N- to C-terminus: F-actin-capping protein subunit beta (97 aa).

Disordered regions lie at residues 1–27 (RLPPQQIEKSPWSNKYDPPLEDGAMPS) and 43–66 (KSGSGTMNLGGSLTRQMEKDETVS). Polar residues predominate over residues 43-57 (KSGSGTMNLGGSLTR). Lys97 carries the N6-acetyllysine modification.

This sequence belongs to the F-actin-capping protein beta subunit family. As to quaternary structure, component of the F-actin capping complex, composed of a heterodimer of an alpha and a beta subunit. Subunit of dynactin, a multiprotein complex part of a tripartite complex with dynein and a adapter, such as BICDL1, BICD2 or HOOK3. The dynactin complex is built around ACTR1A/ACTB filament and consists of an actin-related filament composed of a shoulder domain, a pointed end and a barbed end. Its length is defined by its flexible shoulder domain. The soulder is composed of 2 DCTN1 subunits, 4 DCTN2 and 2 DCTN3. The 4 DCNT2 (via N-terminus) bind the ACTR1A filament and act as molecular rulers to determine the length. The pointed end is important for binding dynein-dynactin cargo adapters. Consists of 4 subunits: ACTR10, DCNT4, DCTN5 and DCTN6. The barbed end is composed of a CAPZA1:CAPZB heterodimers, which binds ACTR1A/ACTB filament and dynactin and stabilizes dynactin. Interacts with ARHGAP17. Interaction with RCSD1/CAPZIP. Component of the WASH complex, composed of F-actin-capping protein subunit alpha (CAPZA1, CAPZA2 or CAPZA3), F-actin-capping protein subunit beta (CAPZB), WASH (WASHC1, WASH2P, WASH3P, WASH4P, WASH5P or WASH6P), WASHC2 (WASHC2A or WASHC2C), WASHC3, WASHC4 and WASHC5. Interacts with ACTG1. Directly interacts with CRACD; this interaction decreases binding to actin.

The protein resides in the cytoplasm. It is found in the cytoskeleton. It localises to the myofibril. The protein localises to the sarcomere. F-actin-capping proteins bind in a Ca(2+)-independent manner to the fast growing ends of actin filaments (barbed end) thereby blocking the exchange of subunits at these ends. Unlike other capping proteins (such as gelsolin and severin), these proteins do not sever actin filaments. Plays a role in the regulation of cell morphology and cytoskeletal organization. Forms, with CAPZB, the barbed end of the fast growing ends of actin filaments in the dynactin complex and stabilizes dynactin structure. The dynactin multiprotein complex activates the molecular motor dynein for ultra-processive transport along microtubules. In Mesocricetus auratus (Golden hamster), this protein is F-actin-capping protein subunit beta.